A 512-amino-acid chain; its full sequence is Cytochrome P450 monooxygenase astD (512 aa).

A helical membrane pass occupies residues 19 to 39; that stretch reads MGISILVMLSTFLALGTIFVY. Asn191 and Asn413 each carry an N-linked (GlcNAc...) asparagine glycan. Cys449 contacts heme.

The protein belongs to the cytochrome P450 family. It depends on heme as a cofactor.

The protein resides in the membrane. Its pathway is secondary metabolite biosynthesis; terpenoid biosynthesis. Its function is as follows. Cytochrome P450 monooxygenase; part of the gene cluster that mediates the biosynthesis of astellolides, drimane-type sesquiterpene esters that show antimicrobial, anti-inflammatory, and anti-tumor activities. The first step in astellolide biosynthesis is performed by the sesquiterpene cyclase astC that catalyzes the formation of drimanyl pyrophosphate from farnesyl pyrophosphate. Drimanyl pyrophosphate is then dephosphorylated by the sesquiterpene phosphatase astI to produce drimanyl monophosphate which is further dephosphorylated to drim-8-ene-11-ol by atsK. Drim-8-ene-11-ol is converted to confertifolin, probably by the cytochrome P450 monooxygenase astD and/or the dehydrogenase astE. The cytochrome P450 monooxygenases astB, astF and astJ then hydroxylate confertifolin at C6, C14, or C15 to form trihydroxy confertifolin. The nonribosomal peptide synthetase astA catalyzes ester bond formation between trihydroxy contifolin and benzoic acid (BA) or 4-hydroxy benzoic acid (4HBA), leading to the formation of dideacetyl astellolides A and B, respectively. Finally, the O-acetyltransferase astG converts dideacetyl astellolides A and B into deacetyl astellolides A and B. The sequence is that of Cytochrome P450 monooxygenase astD from Aspergillus oryzae (strain ATCC 42149 / RIB 40) (Yellow koji mold).